A 460-amino-acid chain; its full sequence is Transcription factor TGA10 (460 aa).

Residues 1–11 are compositionally biased toward basic residues; sequence MQGHHQNHHQH. Disordered regions lie at residues 1-29 and 43-163; these read MQGHHQNHHQHLSSSSATSSHGNFMNKDG and LDGQ…PKTL. Positions 12–21 are enriched in low complexity; sequence LSSSSATSSH. 2 stretches are compositionally biased toward polar residues: residues 65–81 and 121–136; these read TQNLAMRPPTSTLNIFP and DLTNHSQFHQPPQGSK. The segment covering 138–162 has biased composition (basic and acidic residues); the sequence is IKKEGNRKGLASSDHDIPKSSDPKT. The bZIP domain occupies 159–203; the sequence is DPKTLRRLAQNREAARKSRLRKKAYVQQLESCRIKLTQLEQEIQR. The segment at 161-181 is basic motif; the sequence is KTLRRLAQNREAARKSRLRKK. The short motif at 163-170 is the Nuclear localization signal element; sequence LRRLAQNR. The leucine-zipper stretch occupies residues 187 to 201; it reads LESCRIKLTQLEQEI. Residues 236–455 form the DOG1 domain; the sequence is AAVFDMEYAR…QALSSLWLAR (220 aa).

Belongs to the bZIP family. In terms of assembly, homodimer. Binds DNA as a dimer. Interacts with floral glutaredoxins GRXC7/ROXY1 and GRXC8/ROXY2 in the nucleus. Interacts with TGA1, TGA2, TGA3, TGA4, TGA5, TGA6, TGA7, TGA9 and PAN. As to expression, expressed at low levels in inflorescence apex and flowers.

It localises to the nucleus. Together with TGA9, basic leucine-zipper transcription factor required for anther development, probably via the activation of SPL expression in anthers and via the regulation of genes with functions in early and middle tapetal development. Required for signaling responses to pathogen-associated molecular patterns (PAMPs) such as flg22 that involves chloroplastic reactive oxygen species (ROS) production and subsequent expression of H(2)O(2)-responsive genes. The chain is Transcription factor TGA10 from Arabidopsis thaliana (Mouse-ear cress).